The following is a 169-amino-acid chain: MLNTYTNSSTKIQGRLSVWLANHKLPHRPLGFDYQGVEILQIRSEDWLSIAVALYVYGFNYLRSQCAYDVAPGGLLASVYHFTKIEDNVDQPEEICIKIFVSRQKPKIPSVFWIWKSADFQERESYDMLGISYENHPRLKRILMPDTWIGWPLRKDYIVPDFYELQDAY.

The protein belongs to the complex I 30 kDa subunit family. As to quaternary structure, NDH is composed of at least 16 different subunits, 5 of which are encoded in the nucleus.

It is found in the plastid. The protein localises to the chloroplast thylakoid membrane. The catalysed reaction is a plastoquinone + NADH + (n+1) H(+)(in) = a plastoquinol + NAD(+) + n H(+)(out). The enzyme catalyses a plastoquinone + NADPH + (n+1) H(+)(in) = a plastoquinol + NADP(+) + n H(+)(out). Functionally, NDH shuttles electrons from NAD(P)H:plastoquinone, via FMN and iron-sulfur (Fe-S) centers, to quinones in the photosynthetic chain and possibly in a chloroplast respiratory chain. The immediate electron acceptor for the enzyme in this species is believed to be plastoquinone. Couples the redox reaction to proton translocation, and thus conserves the redox energy in a proton gradient. In Physcomitrium patens (Spreading-leaved earth moss), this protein is NAD(P)H-quinone oxidoreductase subunit J, chloroplastic.